Reading from the N-terminus, the 802-residue chain is LPS-assembly protein LptD (802 aa).

Residues Met1–Ala25 form the signal peptide.

Belongs to the LptD family. Component of the lipopolysaccharide transport and assembly complex. Interacts with LptE and LptA.

Its subcellular location is the cell outer membrane. Its function is as follows. Together with LptE, is involved in the assembly of lipopolysaccharide (LPS) at the surface of the outer membrane. The sequence is that of LPS-assembly protein LptD from Neisseria meningitidis serogroup B (strain ATCC BAA-335 / MC58).